The following is a 407-amino-acid chain: Guanine nucleotide-binding protein alpha-1 subunit (407 aa).

The N-myristoyl glycine moiety is linked to residue Gly-2. The S-palmitoyl cysteine moiety is linked to residue Cys-3. In terms of domain architecture, G-alpha spans 73-407 (NDIKVLLLGA…MSNNLQSLMF (335 aa)). A G1 motif region spans residues 76 to 89 (KVLLLGAGDSGKTT). The GTP site is built by Asp-84, Ser-85, Gly-86, Lys-87, Thr-88, Thr-89, Asp-190, Leu-215, Thr-221, Gly-243, Asn-309, Lys-310, Asp-312, and Ala-380. Residue Thr-88 coordinates Mg(2+). The interval 213-221 (DILHCRIKT) is G2 motif. Thr-221 contacts Mg(2+). Positions 236–245 (YRFFDVGGQR) are G3 motif. The segment at 305-312 (ILFLNKLD) is G4 motif. A G5 motif region spans residues 378–383 (TTATDT).

Belongs to the G-alpha family. G(q) subfamily. G proteins are composed of 3 units; alpha, beta and gamma. The alpha chain contains the guanine nucleotide binding site. It depends on Mg(2+) as a cofactor.

In terms of biological role, implicated in the mating and sporulation pathway. Probably coupled to mating-factor receptors. May act in concert with Ras1. This Schizosaccharomyces pombe (strain 972 / ATCC 24843) (Fission yeast) protein is Guanine nucleotide-binding protein alpha-1 subunit (gpa1).